Consider the following 121-residue polypeptide: MEAKAIARHLRVTPMKARRVVDLVRGKQATEALAILKFAQQGASEPVYKLVTSAVANARVKADREGQAFDEDALYITEAFVDEGPTMKRFQPRAQGRAYRINKRTSHVTVVVASKDEKGGN.

This sequence belongs to the universal ribosomal protein uL22 family. Part of the 50S ribosomal subunit.

Its function is as follows. This protein binds specifically to 23S rRNA; its binding is stimulated by other ribosomal proteins, e.g. L4, L17, and L20. It is important during the early stages of 50S assembly. It makes multiple contacts with different domains of the 23S rRNA in the assembled 50S subunit and ribosome. In terms of biological role, the globular domain of the protein is located near the polypeptide exit tunnel on the outside of the subunit, while an extended beta-hairpin is found that lines the wall of the exit tunnel in the center of the 70S ribosome. The chain is Large ribosomal subunit protein uL22 from Micrococcus luteus (strain ATCC 4698 / DSM 20030 / JCM 1464 / CCM 169 / CCUG 5858 / IAM 1056 / NBRC 3333 / NCIMB 9278 / NCTC 2665 / VKM Ac-2230) (Micrococcus lysodeikticus).